The sequence spans 226 residues: Protein pdh1 (226 aa).

An N-terminal signal peptide occupies residues 1–26 (MNHFSKFSVTKRLLILEVLFSAISFG). The Extracellular portion of the chain corresponds to 27-41 (ISIYIKVFGRSSIVT). Residues 42-62 (FFLLCFHLVPNALFLFPWTII) form a helical membrane-spanning segment. Residues 63 to 65 (TTS) lie on the Cytoplasmic side of the membrane. Residues 66-86 (FVDANVFTLLSSILILSVYGV) form a helical membrane-spanning segment. Residues 87-97 (EIERSWGHKEY) lie on the Extracellular side of the membrane. A helical membrane pass occupies residues 98–118 (LLFCQFLTVIPNIAVLIPCFI). Topologically, residues 119-191 (AYKITDSHYL…VFQSFPWTYF (73 aa)) are cytoplasmic. A helical transmembrane segment spans residues 192–212 (CLAVSGTCISELYVLFVHPVV). The Extracellular segment spans residues 213-226 (QELFHLESHTQLPI).

It is found in the membrane. This chain is Protein pdh1 (pdh1), found in Schizosaccharomyces pombe (strain 972 / ATCC 24843) (Fission yeast).